Here is a 689-residue protein sequence, read N- to C-terminus: MSKIRVYEYAKKYNISSKEIITKLKEMNIEVSNHMTMLDDEVVNKLDNEYNNEVKKPSVADEFEVEEKVVRSKKNSNKKKKKGKGNQDKRQENFAGKQQAQTVETPDKITFSGTLTVGELANKLGKEPSEIIKKLFMLGIMATINQDLDKDTIELIASDYGIEVEEEVVIDEIEFETFIDEQDEEEGDLKERPAVVTIMGHVDHGKTTLLDSIRNSKVTAGEAGGITQHIGAYQVEVNDKKITFLDTPGHAAFTTMRARGAQVTDITILVVAADDGVMPQTVEAINHAKAAGVPIIVAVNKMDKPAANPDRVMQELTEYELVPEAWGGDTIFVPISAIKGEGIDNLLEMILLVSEVEEYKANPNRYATGTVIEAQLDKGKGAIATLLVQNGTLRVGDPIVVGTTYGRVRAMVNDIGRRVKVAGPSTPVEITGLNEVPQAGDRFMAFADEKKARQIGESRAQQALLAQRGEKSKLSLEDLFQQIQEGDVKEINLIVKADVQGSVEAMAASLRKIDVEGVKVKIIHTGVGAITESDIILASASNAIVIGFNVRPDVNAKRTAESENVDIRLHRIIYKAIEEIEAAMRGMLDPEFEEKVIGQAEVRQTFKVTKVGTIAGCYVTDGKITRDSGVRIIRDGVVIYEGQLDTLKRFKDDVKEVAQNYECGITIEKYNDIKEGDIIEAFIMEEVKR.

The disordered stretch occupies residues 70–107 (VRSKKNSNKKKKKGKGNQDKRQENFAGKQQAQTVETPD). Over residues 71 to 84 (RSKKNSNKKKKKGK) the composition is skewed to basic residues. The 170-residue stretch at 191–360 (ERPAVVTIMG…LLVSEVEEYK (170 aa)) folds into the tr-type G domain. Residues 200 to 207 (GHVDHGKT) are G1. 200-207 (GHVDHGKT) contacts GTP. A G2 region spans residues 225–229 (GITQH). The segment at 246-249 (DTPG) is G3. GTP is bound by residues 246–250 (DTPGH) and 300–303 (NKMD). The segment at 300–303 (NKMD) is G4. The G5 stretch occupies residues 336–338 (SAI).

This sequence belongs to the TRAFAC class translation factor GTPase superfamily. Classic translation factor GTPase family. IF-2 subfamily.

It localises to the cytoplasm. In terms of biological role, one of the essential components for the initiation of protein synthesis. Protects formylmethionyl-tRNA from spontaneous hydrolysis and promotes its binding to the 30S ribosomal subunits. Also involved in the hydrolysis of GTP during the formation of the 70S ribosomal complex. This chain is Translation initiation factor IF-2, found in Bacillus cytotoxicus (strain DSM 22905 / CIP 110041 / 391-98 / NVH 391-98).